A 199-amino-acid polypeptide reads, in one-letter code: Recombination protein RecR (199 aa).

Residues 58 to 73 (CKKCFNFTSEDECEIC) form a C4-type zinc finger. A Toprim domain is found at 81-175 (KLICVVAETK…KVTRIAYGLP (95 aa)).

It belongs to the RecR family.

Its function is as follows. May play a role in DNA repair. It seems to be involved in an RecBC-independent recombinational process of DNA repair. It may act with RecF and RecO. The polypeptide is Recombination protein RecR (Prochlorococcus marinus (strain MIT 9312)).